Here is a 195-residue protein sequence, read N- to C-terminus: Holliday junction branch migration complex subunit RuvA (195 aa).

Residues 1-66 (MNYLVFKVIY…LIIKDLYGFR (66 aa)) form a domain I region. Residues 67-141 (TYNERLLFID…KYINKVSEKN (75 aa)) are domain II. Asparagine 141 is a region of interest (flexible linker). The interval 141–195 (NPWAKELSIGLENLGYDKKDIEYAITKVKVDTQQNIDISEIIGCAIKEISLRHEN) is domain III.

The protein belongs to the RuvA family. As to quaternary structure, homotetramer. Forms an RuvA(8)-RuvB(12)-Holliday junction (HJ) complex. HJ DNA is sandwiched between 2 RuvA tetramers; dsDNA enters through RuvA and exits via RuvB. An RuvB hexamer assembles on each DNA strand where it exits the tetramer. Each RuvB hexamer is contacted by two RuvA subunits (via domain III) on 2 adjacent RuvB subunits; this complex drives branch migration. In the full resolvosome a probable DNA-RuvA(4)-RuvB(12)-RuvC(2) complex forms which resolves the HJ.

The protein resides in the cytoplasm. Functionally, the RuvA-RuvB-RuvC complex processes Holliday junction (HJ) DNA during genetic recombination and DNA repair, while the RuvA-RuvB complex plays an important role in the rescue of blocked DNA replication forks via replication fork reversal (RFR). RuvA specifically binds to HJ cruciform DNA, conferring on it an open structure. The RuvB hexamer acts as an ATP-dependent pump, pulling dsDNA into and through the RuvAB complex. HJ branch migration allows RuvC to scan DNA until it finds its consensus sequence, where it cleaves and resolves the cruciform DNA. The protein is Holliday junction branch migration complex subunit RuvA of Ureaplasma urealyticum serovar 10 (strain ATCC 33699 / Western).